Here is a 389-residue protein sequence, read N- to C-terminus: Mannitol-1-phosphate 5-dehydrogenase (389 aa).

NAD(+) is bound at residue 5 to 16 (AVHFGAGNIGRG). Residue Lys215 is part of the active site.

Belongs to the mannitol dehydrogenase family. Monomer.

The catalysed reaction is D-mannitol 1-phosphate + NAD(+) = beta-D-fructose 6-phosphate + NADH + H(+). Catalyzes the NAD(H)-dependent interconversion of D-fructose 6-phosphate and D-mannitol 1-phosphate in the mannitol metabolic pathway. The polypeptide is Mannitol-1-phosphate 5-dehydrogenase (Sclerotinia sclerotiorum (strain ATCC 18683 / 1980 / Ss-1) (White mold)).